Here is a 220-residue protein sequence, read N- to C-terminus: Acetate CoA-transferase subunit alpha (220 aa).

Gly24–Gly30 provides a ligand contact to CoA.

This sequence belongs to the 3-oxoacid CoA-transferase subunit A family. In terms of assembly, heterotetramer composed of two alpha subunits (AtoD) and two beta subunits (AtoA).

The protein resides in the cytoplasm. The catalysed reaction is an acyl-CoA + acetate = a carboxylate + acetyl-CoA. It catalyses the reaction acetoacetate + acetyl-CoA = acetoacetyl-CoA + acetate. It carries out the reaction butanoate + acetyl-CoA = butanoyl-CoA + acetate. The enzyme catalyses acetoacetate + butanoyl-CoA = acetoacetyl-CoA + butanoate. It functions in the pathway lipid metabolism; short-chain fatty acid metabolism. Inhibited by p-chloromercuribenzoate. Coenzyme A transferase which is involved in short-chain fatty acid degradation and catalyzes the activation of short-chain fatty acids to their respective CoA thiolesters. During acetoacetate degradation, catalyzes the transfer of CoA from acetyl-CoA to acetoacetate by a mechanism involving a covalent enzyme-CoA compound as a reaction intermediate. Utilizes a variety of short chain acyl-CoA and carboxylic acid substrates but exhibits maximal activity with normal and 3-keto substrates. This chain is Acetate CoA-transferase subunit alpha, found in Escherichia coli (strain K12).